A 299-amino-acid polypeptide reads, in one-letter code: NAD(+) hydrolase PdTIR (299 aa).

A TIR domain is found at 164–297 (PPHDIFISHA…EIVADLMAII (134 aa)). NAD(+)-binding positions include 173-174 (AW) and Arg203. Glu239 is an active-site residue.

Homodimer. Interacts with host MYD88.

The enzyme catalyses NAD(+) + H2O = ADP-D-ribose + nicotinamide + H(+). In terms of biological role, NAD(+) hydrolase (NADase) that catalyzes cleavage of NAD(+) into ADP-D-ribose (ADPR) and nicotinamide. This is NAD(+) hydrolase PdTIR from Paracoccus denitrificans (strain Pd 1222).